Consider the following 65-residue polypeptide: Small ribosomal subunit protein bS21 (65 aa).

A disordered region spans residues 45–65; the sequence is GRLKRSRSRRRAQRANEERNS. Residues 48–57 are compositionally biased toward basic residues; it reads KRSRSRRRAQ.

The protein belongs to the bacterial ribosomal protein bS21 family.

This chain is Small ribosomal subunit protein bS21, found in Pelodictyon phaeoclathratiforme (strain DSM 5477 / BU-1).